The following is a 153-amino-acid chain: Insulin-like growth factor 1 (153 aa).

The tract at residues 49–77 is b; that stretch reads GPETLCGAELVDALQFVCGDRGFYFNKPT. 3 disulfide bridges follow: Cys-54–Cys-96, Cys-66–Cys-109, and Cys-95–Cys-100. The interval 78–89 is c; that stretch reads GYGSSSRRAPQT. The interval 90–110 is a; that stretch reads GIVDECCFRSCDLRRLEMYCA. The tract at residues 111 to 118 is d; sequence PLKPAKSA. Positions 119-153 are cleaved as a propeptide — e peptide; sequence RSVRAQRHTDMPKAQKEVHLKNASRGSAGNKNYRM. A disordered region spans residues 120–153; that stretch reads SVRAQRHTDMPKAQKEVHLKNASRGSAGNKNYRM. Positions 125–138 are enriched in basic and acidic residues; it reads RHTDMPKAQKEVHL. Positions 142 to 153 are enriched in polar residues; it reads SRGSAGNKNYRM.

The protein belongs to the insulin family. Forms a ternary complex with IGFR1 and ITGAV:ITGB3. Forms a ternary complex with IGFR1 and ITGA6:ITGB4. Forms a ternary complex with IGFBP3 and ALS.

Its subcellular location is the secreted. Its function is as follows. The insulin-like growth factors, isolated from plasma, are structurally and functionally related to insulin but have a much higher growth-promoting activity. May be a physiological regulator of [1-14C]-2-deoxy-D-glucose (2DG) transport and glycogen synthesis in osteoblasts. Stimulates glucose transport in bone-derived osteoblastic (PyMS) cells and is effective at much lower concentrations than insulin, not only regarding glycogen and DNA synthesis but also with regard to enhancing glucose uptake. May play a role in synapse maturation. Ca(2+)-dependent exocytosis of IGF1 is required for sensory perception of smell in the olfactory bulb. Acts as a ligand for IGF1R. Binds to the alpha subunit of IGF1R, leading to the activation of the intrinsic tyrosine kinase activity which autophosphorylates tyrosine residues in the beta subunit thus initiating a cascade of down-stream signaling events leading to activation of the PI3K-AKT/PKB and the Ras-MAPK pathways. Binds to integrins ITGAV:ITGB3 and ITGA6:ITGB4. Its binding to integrins and subsequent ternary complex formation with integrins and IGFR1 are essential for IGF1 signaling. Induces the phosphorylation and activation of IGFR1, MAPK3/ERK1, MAPK1/ERK2 and AKT1. As part of the MAPK/ERK signaling pathway, acts as a negative regulator of apoptosis in cardiomyocytes via promotion of STUB1/CHIP-mediated ubiquitination and degradation of ICER-type isoforms of CREM. This is Insulin-like growth factor 1 from Ailuropoda melanoleuca (Giant panda).